A 472-amino-acid chain; its full sequence is P2X purinoceptor 2 (472 aa).

The Cytoplasmic portion of the chain corresponds to Met-1–Arg-34. Disulfide bonds link Cys-9–Cys-430, Cys-113–Cys-164, Cys-124–Cys-147, Cys-130–Cys-158, Cys-214–Cys-224, and Cys-258–Cys-267. The chain crosses the membrane as a helical span at residues Met-35 to Gln-52. At Lys-53–Ser-326 the chain is on the extracellular side. 2 residues coordinate ATP: Lys-69 and Lys-71. N-linked (GlcNAc...) asparagine glycosylation occurs at Asn-182. Thr-184 contributes to the ATP binding site. Asn-239 is a glycosylation site (N-linked (GlcNAc...) asparagine). ATP-binding residues include Ser-284, Asn-288, and Arg-290. N-linked (GlcNAc...) asparagine glycosylation is present at Asn-298. Lys-308 provides a ligand contact to ATP. Residues Ala-309–Ala-322 form a pore-forming motif region. The chain crosses the membrane as a helical span at residues Leu-327–Leu-347. The Cytoplasmic portion of the chain corresponds to Cys-348–Leu-472. A disordered region spans residues Pro-393–Leu-472. The segment covering Pro-456–Asp-465 has biased composition (polar residues).

Belongs to the P2X receptor family. In terms of assembly, homotrimer and heterotrimer; functional P2XRs are organized as homomeric and heteromeric trimers. Homotrimer. Forms heterotrimer with P2RX1. Forms heterotrimer with P2RX6. Forms heterotrimer with P2RX3. In terms of tissue distribution, high levels in pituitary and vas deferens. Lower extent in spinal cord, bladder, brain, adrenal, testis, sensory epithelia from the inner ear.

It localises to the cell membrane. The catalysed reaction is Ca(2+)(in) = Ca(2+)(out). The enzyme catalyses K(+)(in) = K(+)(out). It carries out the reaction Na(+)(in) = Na(+)(out). Fast activation by external ATP. Exhibits slow desensitization during prolonged ATP activation. Not sensitive to the ATP agonist:alpha/beta-methylene-ATP. Its function is as follows. ATP-gated nonselective transmembrane cation channel permeable to potassium, sodium and calcium. Activation by extracellular ATP induces a variety of cellular responses, such as excitatory postsynaptic responses in sensory neurons, neuromuscular junctions (NMJ) formation, hearing, perception of taste and peristalsis. In the inner ear, regulates sound transduction and auditory neurotransmission, outer hair cell electromotility, inner ear gap junctions, and K(+) recycling. Mediates synaptic transmission between neurons and from neurons to smooth muscle. This is P2X purinoceptor 2 (P2rx2) from Rattus norvegicus (Rat).